A 218-amino-acid polypeptide reads, in one-letter code: Small ribosomal subunit protein uS3c (218 aa).

One can recognise a KH type-2 domain in the interval 43-118 (IKNYVQKNMR…KLNIAITRIA (76 aa)).

It belongs to the universal ribosomal protein uS3 family. Part of the 30S ribosomal subunit.

Its subcellular location is the plastid. It localises to the chloroplast. This is Small ribosomal subunit protein uS3c (rps3) from Buxus microphylla (Littleleaf boxwood).